The chain runs to 159 residues: Protein-export protein SecB (159 aa).

This sequence belongs to the SecB family. Homotetramer, a dimer of dimers. One homotetramer interacts with 1 SecA dimer.

It localises to the cytoplasm. One of the proteins required for the normal export of preproteins out of the cell cytoplasm. It is a molecular chaperone that binds to a subset of precursor proteins, maintaining them in a translocation-competent state. It also specifically binds to its receptor SecA. In Pseudomonas fluorescens (strain SBW25), this protein is Protein-export protein SecB.